We begin with the raw amino-acid sequence, 1019 residues long: DNA topoisomerase 1 (1019 aa).

Residues 1–160 (MNSIQVKNEP…KTMSITGSGE (160 aa)) form a disordered region. Positions 46 to 56 (KPLAKRPKVED) are enriched in basic and acidic residues. Residues 62 to 78 (PLTSTVSSQNGVQKRSG) show a composition bias toward polar residues. 2 stretches are compositionally biased toward acidic residues: residues 83–93 (DDNDDDSDSDS) and 107–136 (SDDDEDDDDDDDEGDDDDEEDDDDDDDDDD). 3 interaction with DNA regions span residues 379–380 (KY), 442–447 (RAGNEK), and 556–558 (SAK). A Topo IB-type catalytic domain is found at 386–860 (TSNFKTNSDR…KKVKKEEEEN (475 aa)). The segment at 716–737 (EQKGLTGDDGTPKKGKKAKNVE) is disordered. Tyr822 (O-(3'-phospho-DNA)-tyrosine intermediate) is an active-site residue. Disordered regions lie at residues 843 to 890 (GQGK…TGDS) and 940 to 1019 (MRKL…AAVV). The span at 854 to 863 (KKEEEENDIK) shows a compositional bias: basic and acidic residues. Residues 864–879 (PKKKDAKGAASKKRAA) show a composition bias toward basic residues. Basic and acidic residues-rich tracts occupy residues 940-950 (MRKLDSAERKG) and 980-996 (TSADRKMSKPIKAVDKT). Over residues 997-1012 (EESDDDLSSDSSDDED) the composition is skewed to acidic residues.

This sequence belongs to the type IB topoisomerase family. In terms of assembly, monomer.

The catalysed reaction is ATP-independent breakage of single-stranded DNA, followed by passage and rejoining.. Functionally, releases the supercoiling and torsional tension of DNA introduced during the DNA replication and transcription by transiently cleaving and rejoining one strand of the DNA duplex. Introduces a single-strand break via transesterification at a target site in duplex DNA. The scissile phosphodiester is attacked by the catalytic tyrosine of the enzyme, resulting in the formation of a DNA-(3'-phosphotyrosyl)-enzyme intermediate and the expulsion of a 5'-OH DNA strand. The free DNA strand then rotates around the intact phosphodiester bond on the opposing strand, thus removing DNA supercoils. Finally, in the religation step, the DNA 5'-OH attacks the covalent intermediate to expel the active-site tyrosine and restore the DNA phosphodiester backbone. The protein is DNA topoisomerase 1 (TOP1) of Mycosarcoma maydis (Corn smut fungus).